A 688-amino-acid polypeptide reads, in one-letter code: Coiled-coil domain-containing protein 157 (688 aa).

Over residues 143–153 (ANQGETLTSKP) the composition is skewed to polar residues. Disordered stretches follow at residues 143–162 (ANQGETLTSKPTAKGEPAGS), 168–189 (AQLVKPPSPVPGLPQACPERDS), 322–341 (QAARQRQAQEAEQHRAQWER), 366–385 (QQRESTQAVESKAQQLQAEA), and 592–688 (QGAE…ERPT). Residues 288 to 572 (KLVGLLRAQL…LSKIREVAQQ (285 aa)) adopt a coiled-coil conformation. Over residues 369–382 (ESTQAVESKAQQLQ) the composition is skewed to polar residues. Residues 671–680 (SPSSGRASPA) show a composition bias toward low complexity.

The chain is Coiled-coil domain-containing protein 157 (CCDC157) from Bos taurus (Bovine).